A 333-amino-acid chain; its full sequence is MALACTDSANSTFSRVDSPTSGPSDQLTTHDLDRHIEKLMRCELIAEQDVKTLCAKAREILAEEGNVQVIDSPVTICGDIHGQFYDLMELFKVGGPVPNTNYLFLGDFVDRGFYSVETFLLLLALKARYPDRMMLIRGNHESRQITQVYGFYDECLRKYGNASVWKHCTEVFDYLSLAAVIDGKVFCVHGGLSPSISTMDQIRVIDRKQEVPHDGPMCDLLWSDPEEGNVGWGLSPRGAGYLFGADASKTFCETNGVDLICRAHQLVMEGYKWHFNEKVLTVWSAPNYCYRCGNVAAILELDENLNKEFTIFEAAPQENRGAPAKKPHADYFL.

Residues 1-28 (MALACTDSANSTFSRVDSPTSGPSDQLT) are disordered. Residues 7-27 (DSANSTFSRVDSPTSGPSDQL) show a composition bias toward polar residues. Residues aspartate 79, histidine 81, aspartate 107, and asparagine 139 each coordinate Mn(2+). The active-site Proton donor is the histidine 140. Mn(2+) contacts are provided by histidine 189 and histidine 264. At leucine 333 the chain carries Leucine methyl ester.

It belongs to the PPP phosphatase family. PP-4 (PP-X) subfamily. In terms of assembly, serine/threonine-protein phosphatase 4 (PP4) occurs in different assemblies of the catalytic and one or more regulatory subunits. The regulatory subunits are likely to be ppfr-1, ppfr-2, ppfr-4 and smk-1. Interacts with mei-1. Mn(2+) is required as a cofactor. In terms of processing, methylation at the C-terminal Leu-333 is critical for interactions with regulatory subunits.

It is found in the cytoplasm. Its subcellular location is the cytoskeleton. The protein resides in the microtubule organizing center. The protein localises to the centrosome. The enzyme catalyses O-phospho-L-seryl-[protein] + H2O = L-seryl-[protein] + phosphate. It catalyses the reaction O-phospho-L-threonyl-[protein] + H2O = L-threonyl-[protein] + phosphate. Protein phosphatase which plays an essential role in meiosis and in early embryonic mitosis. During spermatocyte meiosis and the first embryonic mitosis, regulates centrosome maturation, and thus spindle formation, by recruiting some of the components of the pericentriolar material (PCM). During oocyte meiosis I, regulates meiotic chromosome dynamics including synapsis-independent chromosome pairing, restriction of synapsis to homologous chromosomes, programmed DNA double-strand break initiation and crossover formation resulting in chiasma formation. During oocyte meiosis II and probably together with regulatory subunit ppfr-1, may regulate microtubule severing by dephosphorylating and activating mei-1, a component of the katanin microtubule severing complex. The protein is Serine/threonine-protein phosphatase 4 catalytic subunit 1 of Caenorhabditis elegans.